Reading from the N-terminus, the 201-residue chain is MPIGVPKVPFRIPGEEDAVWVDVYRLHRERLLFLGQGVDSEISNQLIGLMVYLSLEDETRDLFLFINSPGGWVVPGVAIYDTMQFVPPDVHTICMGLAASMGSFLLVGGEITKRIAFPHARVMIHQPASSFYEAQTGEFVLEAEELLKLRETLTRVYVQRTGNPLWVVSEDMERDVFMSATEAQAHGIVDFVAVENTGDFA.

The active-site Nucleophile is the serine 100. The active site involves histidine 125.

The protein belongs to the peptidase S14 family. Component of the chloroplastic Clp protease core complex.

The protein resides in the plastid. The protein localises to the chloroplast stroma. It carries out the reaction Hydrolysis of proteins to small peptides in the presence of ATP and magnesium. alpha-casein is the usual test substrate. In the absence of ATP, only oligopeptides shorter than five residues are hydrolyzed (such as succinyl-Leu-Tyr-|-NHMec, and Leu-Tyr-Leu-|-Tyr-Trp, in which cleavage of the -Tyr-|-Leu- and -Tyr-|-Trp bonds also occurs).. Functionally, cleaves peptides in various proteins in a process that requires ATP hydrolysis. Has a chymotrypsin-like activity. Plays a major role in the degradation of misfolded proteins. This Ranunculus macranthus (Large buttercup) protein is ATP-dependent Clp protease proteolytic subunit.